The primary structure comprises 431 residues: MKASYQNHDLEMFFSTNLAQVDGAVNAGIEAELNRQNQQIELIASENIVSKAVMQAQGTCLTNKYAEGYAGHRYYGGCEHVDEVEKIAIARAKQLFQCEYVNVQPHSGAQANGAVMLALLQPGDTILGMSLDAGGHLTHGARPALSGKWFDAVQYGVNKDTLEIDYNQVRELAIEHKPKMIIAGGSAIPRIINFAKFREIADEVGAFLMVDMAHIAGLIAAGEHPSPIPHAHVITTTTHKTLRGPRGGMILTNLEDINKKINSAVFPGLQGGPLMHVIAGKAVAFGEALEPDFKIYIKNVISNAKVLAEVLQNRGCDIVTNGTDTHLMLVDLRPKGLKGNAAENALERAGITCNKNGIPFDTEKPMVTSGIRLGTPAGTSRGFGNDEFKQIGEWIGDVLDGLAANPEDNSEVEKHVKQQVQKLCSRFPLYQ.

Residues Leu131 and 135–137 (GHL) each bind (6S)-5,6,7,8-tetrahydrofolate. The residue at position 240 (Lys240) is an N6-(pyridoxal phosphate)lysine.

Belongs to the SHMT family. Homodimer. It depends on pyridoxal 5'-phosphate as a cofactor.

The protein localises to the cytoplasm. It catalyses the reaction (6R)-5,10-methylene-5,6,7,8-tetrahydrofolate + glycine + H2O = (6S)-5,6,7,8-tetrahydrofolate + L-serine. Its pathway is one-carbon metabolism; tetrahydrofolate interconversion. It functions in the pathway amino-acid biosynthesis; glycine biosynthesis; glycine from L-serine: step 1/1. Catalyzes the reversible interconversion of serine and glycine with tetrahydrofolate (THF) serving as the one-carbon carrier. This reaction serves as the major source of one-carbon groups required for the biosynthesis of purines, thymidylate, methionine, and other important biomolecules. Also exhibits THF-independent aldolase activity toward beta-hydroxyamino acids, producing glycine and aldehydes, via a retro-aldol mechanism. This chain is Serine hydroxymethyltransferase 2, found in Photobacterium profundum (strain SS9).